Reading from the N-terminus, the 390-residue chain is 3-ketoacyl-CoA thiolase (390 aa).

Residue cysteine 95 is the Acyl-thioester intermediate of the active site. Residues histidine 346 and cysteine 376 each act as proton acceptor in the active site.

Belongs to the thiolase-like superfamily. Thiolase family. As to quaternary structure, heterotetramer of two alpha chains (FadB) and two beta chains (FadA).

Its subcellular location is the cytoplasm. It carries out the reaction an acyl-CoA + acetyl-CoA = a 3-oxoacyl-CoA + CoA. The protein operates within lipid metabolism; fatty acid beta-oxidation. Functionally, catalyzes the final step of fatty acid oxidation in which acetyl-CoA is released and the CoA ester of a fatty acid two carbons shorter is formed. The chain is 3-ketoacyl-CoA thiolase from Acinetobacter baumannii (strain ATCC 17978 / DSM 105126 / CIP 53.77 / LMG 1025 / NCDC KC755 / 5377).